A 78-amino-acid polypeptide reads, in one-letter code: Beta-defensin 135 (78 aa).

A signal peptide spans 1 to 24; that stretch reads MATRSVLLALVVLNLLFYVPPGRS. Cystine bridges form between C37/C64 and C48/C66.

Belongs to the beta-defensin family.

The protein resides in the secreted. Functionally, has antibacterial activity. The protein is Beta-defensin 135 (DEFB135) of Pan troglodytes (Chimpanzee).